The following is a 574-amino-acid chain: ESX-1 secretion system protein EccA1 (574 aa).

335–342 (GPPGTGKT) serves as a coordination point for ATP.

Belongs to the CbxX/CfxQ family. In terms of assembly, part of the ESX-1 / type VII secretion system (T7SS), which is composed of cytosolic and membrane components.

It is found in the cytoplasm. Part of the ESX-1 / type VII specialized secretion system (T7SS), which exports several proteins including EsxA and EsxB. Plays a role in DNA conjugation, in both donor and recipient strains. EccA1 exhibits ATPase activity and may provide energy for the export of ESX-1 substrates. The chain is ESX-1 secretion system protein EccA1 from Mycolicibacterium smegmatis (strain ATCC 700084 / mc(2)155) (Mycobacterium smegmatis).